We begin with the raw amino-acid sequence, 56 residues long: Sex-specific storage protein 1 (56 aa).

This sequence belongs to the hemocyanin family. As to expression, expressed in fat body and ovary.

It localises to the secreted. In terms of biological role, larval storage protein (LSP) which may serve as a store of amino acids for synthesis of adult proteins. The biosynthesis, accumulation and sequestration of storage protein-1 takes place during metamorphosis and saves energy for the non-feeding pupal stage. May also be essential for egg formation. The protein is Sex-specific storage protein 1 of Amsacta albistriga (Red hairy caterpillar).